Reading from the N-terminus, the 88-residue chain is Molybdopterin synthase sulfur carrier subunit (88 aa).

Gly88 carries the post-translational modification 1-thioglycine; alternate. Gly88 carries the glycyl adenylate; alternate modification.

Belongs to the MoaD family. MOCS2A subfamily. In terms of assembly, heterotetramer; composed of 2 small (MOCS2A) and 2 large (MOCS2B) subunits. In terms of processing, C-terminal thiocarboxylation occurs in 2 steps, it is first acyl-adenylated (-COAMP) via the hesA/moeB/thiF part of MOCS3, then thiocarboxylated (-COSH) via the rhodanese domain of MOCS3.

Its subcellular location is the cytoplasm. The protein localises to the cytosol. It participates in cofactor biosynthesis; molybdopterin biosynthesis. Its function is as follows. Acts as a sulfur carrier required for molybdopterin biosynthesis. Component of the molybdopterin synthase complex that catalyzes the conversion of precursor Z into molybdopterin by mediating the incorporation of 2 sulfur atoms into precursor Z to generate a dithiolene group. In the complex, serves as sulfur donor by being thiocarboxylated (-COSH) at its C-terminus by MOCS3. After interaction with MOCS2B, the sulfur is then transferred to precursor Z to form molybdopterin. The chain is Molybdopterin synthase sulfur carrier subunit from Mus musculus (Mouse).